Reading from the N-terminus, the 875-residue chain is Aminopeptidase M1-B (875 aa).

Residues I96–V203 form a required for membrane association region. Substrate-binding positions include E136 and G269–N273. H305 is a binding site for Zn(2+). Residue E306 is the Proton acceptor of the active site. 2 residues coordinate Zn(2+): H309 and E328. Residues L722–L723 carry the Dileucine internalization motif motif.

It belongs to the peptidase M1 family. As to quaternary structure, homodimer. Zn(2+) serves as cofactor.

The protein localises to the membrane. Its subcellular location is the microsome membrane. The protein resides in the cytoplasm. The enzyme catalyses Release of an N-terminal amino acid, Xaa-|-Yaa- from a peptide, amide or arylamide. Xaa is preferably Ala, but may be most amino acids including Pro (slow action). When a terminal hydrophobic residue is followed by a prolyl residue, the two may be released as an intact Xaa-Pro dipeptide.. The sequence is that of Aminopeptidase M1-B from Oryza sativa subsp. japonica (Rice).